A 450-amino-acid chain; its full sequence is Chromosomal replication initiator protein DnaA (450 aa).

Residues 1-84 (MENIHDLWDR…AVKFIIPPNQ (84 aa)) form a domain I, interacts with DnaA modulators region. Positions 84–111 (QDDEELEFQSSKKKQRKPYEETNDFPQS) are domain II. The interval 89–108 (LEFQSSKKKQRKPYEETNDF) is disordered. The segment at 112–328 (MLNPKYTFDT…GALIRVVAYS (217 aa)) is domain III, AAA+ region. The ATP site is built by Gly-156, Gly-158, Lys-159, and Thr-160. Residues 329–450 (SLINKEITAD…QEIQEKLKQL (122 aa)) form a domain IV, binds dsDNA region.

Belongs to the DnaA family. Oligomerizes as a right-handed, spiral filament on DNA at oriC.

It is found in the cytoplasm. Functionally, plays an essential role in the initiation and regulation of chromosomal replication. ATP-DnaA binds to the origin of replication (oriC) to initiate formation of the DNA replication initiation complex once per cell cycle. Binds the DnaA box (a 9 base pair repeat at the origin) and separates the double-stranded (ds)DNA. Forms a right-handed helical filament on oriC DNA; dsDNA binds to the exterior of the filament while single-stranded (ss)DNA is stabiized in the filament's interior. The ATP-DnaA-oriC complex binds and stabilizes one strand of the AT-rich DNA unwinding element (DUE), permitting loading of DNA polymerase. After initiation quickly degrades to an ADP-DnaA complex that is not apt for DNA replication. Binds acidic phospholipids. The chain is Chromosomal replication initiator protein DnaA from Geobacillus kaustophilus (strain HTA426).